Consider the following 161-residue polypeptide: Beta-lactoglobulin-1 (161 aa).

2 cysteine pairs are disulfide-bonded: C66–C159 and C106–C119.

The protein belongs to the calycin superfamily. Lipocalin family. As to quaternary structure, monomer. In terms of tissue distribution, synthesized in mammary gland and secreted in milk.

It localises to the secreted. Functionally, primary component of whey, it binds retinol and is probably involved in the transport of that molecule. The polypeptide is Beta-lactoglobulin-1 (LGB1) (Canis lupus familiaris (Dog)).